The chain runs to 283 residues: Tetrahydroxynaphthalene reductase (283 aa).

Residues 1 to 21 (MPAVTQPRGESKYDAIPGPLG) are disordered. 39 to 63 (RGIGREMAMELGRRGCKVIVNYANS) lines the NADP(+) pocket. S164 provides a ligand contact to substrate. Y178 (proton acceptor) is an active-site residue.

The protein belongs to the short-chain dehydrogenases/reductases (SDR) family. In terms of assembly, homotetramer.

The catalysed reaction is scytalone + NADP(+) = naphthalene-1,3,6,8-tetrol + NADPH + H(+). Its pathway is pigment biosynthesis; melanin biosynthesis. Its function is as follows. Catalyzes the NADPH-dependent reduction of 1,3,6,8-tetrahydroxynaphthalene (T4HN) into (+)-scytalone and 1,3,8-trihydroxynaphthalene into (-)-vermelone. This enzyme is the biochemical target of several commercially important fungicides which are used to prevent blast disease in rice plants. In Pyricularia oryzae (strain 70-15 / ATCC MYA-4617 / FGSC 8958) (Rice blast fungus), this protein is Tetrahydroxynaphthalene reductase.